Here is a 421-residue protein sequence, read N- to C-terminus: F-box/kelch-repeat protein At1g26930 (421 aa).

Residues 54–73 form a disordered region; that stretch reads TDSSEGEDNGSSSDSGTLIP. The F-box domain maps to 70 to 117; sequence TLIPGMNRDDSLSCLIRCSRADYCSIASVNRSLRSLIRSGEIYRLRRL. 5 Kelch repeats span residues 114–167, 169–212, 213–260, 261–312, and 320–366; these read LRRL…LAVG, DLLV…SYGE, IAVL…FMDG, KFYV…MSAA, and AVVN…GLAF.

In Arabidopsis thaliana (Mouse-ear cress), this protein is F-box/kelch-repeat protein At1g26930.